Reading from the N-terminus, the 410-residue chain is Arginine deiminase (410 aa).

The active-site Amidino-cysteine intermediate is the Cys-400.

Belongs to the arginine deiminase family.

Its subcellular location is the cytoplasm. It carries out the reaction L-arginine + H2O = L-citrulline + NH4(+). The protein operates within amino-acid degradation; L-arginine degradation via ADI pathway; carbamoyl phosphate from L-arginine: step 1/2. The protein is Arginine deiminase of Levilactobacillus brevis (strain ATCC 367 / BCRC 12310 / CIP 105137 / JCM 1170 / LMG 11437 / NCIMB 947 / NCTC 947) (Lactobacillus brevis).